A 564-amino-acid chain; its full sequence is Ribonuclease J (564 aa).

The Zn(2+) site is built by His-85, His-87, Asp-89, His-90, His-153, and Asp-175. Substrate is bound at residue 375 to 379; it reads HVSGH. His-401 is a binding site for Zn(2+).

The protein belongs to the metallo-beta-lactamase superfamily. RNA-metabolizing metallo-beta-lactamase-like family. Bacterial RNase J subfamily. Homodimer, may be a subunit of the RNA degradosome. Zn(2+) serves as cofactor.

The protein localises to the cytoplasm. Its function is as follows. An RNase that has 5'-3' exonuclease and possibly endonuclease activity. Plays a role in 16S and 23S rRNA processing. Might have a role in mRNA maturation and/or decay. The protein is Ribonuclease J of Sinorhizobium meliloti (strain Sm2011 / Rm2011 / 2011).